The chain runs to 398 residues: Diaminopropionate ammonia-lyase (398 aa).

The residue at position 77 (Lys77) is an N6-(pyridoxal phosphate)lysine.

The protein belongs to the diaminopropionate ammonia-lyase family. Homodimer. Pyridoxal 5'-phosphate is required as a cofactor.

It catalyses the reaction (S)-2,3-diaminopropanoate + H2O + H(+) = pyruvate + 2 NH4(+). It carries out the reaction (R)-2,3-diaminopropanoate + H2O + H(+) = pyruvate + 2 NH4(+). Functionally, catalyzes the alpha,beta-elimination reaction of both L- and D-alpha,beta-diaminopropionate (DAP) to form pyruvate and ammonia. The D-isomer of serine is degraded to pyruvate, though very poorly; other amino acids (L-serine, D- and L-threonine, D- and L-beta-Cl-alanine) are not substrates. The protein is Diaminopropionate ammonia-lyase (ygeX) of Escherichia coli O157:H7.